A 229-amino-acid chain; its full sequence is Potassium/proton antiporter CemA (229 aa).

2 helical membrane passes run 7–27 and 106–126; these read LASL…SISF and IISH…YFIL.

The protein belongs to the CemA family.

Its subcellular location is the plastid. It is found in the chloroplast inner membrane. The enzyme catalyses K(+)(in) + H(+)(out) = K(+)(out) + H(+)(in). In terms of biological role, contributes to K(+)/H(+) antiport activity by supporting proton efflux to control proton extrusion and homeostasis in chloroplasts in a light-dependent manner to modulate photosynthesis. Prevents excessive induction of non-photochemical quenching (NPQ) under continuous-light conditions. Indirectly promotes efficient inorganic carbon uptake into chloroplasts. The protein is Potassium/proton antiporter CemA of Cycas taitungensis (Prince sago).